The following is a 319-amino-acid chain: Tyrosine--tRNA ligase (319 aa).

Y35 is a binding site for L-tyrosine. The 'HIGH' region motif lies at 40–48; it reads PSGKIHLGH. L-tyrosine-binding residues include Y156, Q160, D163, and Q178. Residues 213–217 carry the 'KMSKS' region motif; that stretch reads KMSSS. S216 contacts ATP.

It belongs to the class-I aminoacyl-tRNA synthetase family. TyrS type 3 subfamily. In terms of assembly, homodimer.

It is found in the cytoplasm. The catalysed reaction is tRNA(Tyr) + L-tyrosine + ATP = L-tyrosyl-tRNA(Tyr) + AMP + diphosphate + H(+). Functionally, catalyzes the attachment of tyrosine to tRNA(Tyr) in a two-step reaction: tyrosine is first activated by ATP to form Tyr-AMP and then transferred to the acceptor end of tRNA(Tyr). In Methanobrevibacter smithii (strain ATCC 35061 / DSM 861 / OCM 144 / PS), this protein is Tyrosine--tRNA ligase.